A 346-amino-acid polypeptide reads, in one-letter code: uncharacterized protein (346 aa).

It belongs to the Gfo/Idh/MocA family.

This is an uncharacterized protein from Escherichia coli (strain K12).